The sequence spans 493 residues: UDP-N-acetylmuramoyl-L-alanyl-D-glutamate--2,6-diaminopimelate ligase (493 aa).

UDP-N-acetyl-alpha-D-muramoyl-L-alanyl-D-glutamate-binding residues include Leu30 and Ser32. 117-123 (GTNGKTT) lines the ATP pocket. UDP-N-acetyl-alpha-D-muramoyl-L-alanyl-D-glutamate is bound by residues Asn158, 159–160 (TT), Ser186, Gln192, and Arg194. Lys226 bears the N6-carboxylysine mark. Meso-2,6-diaminopimelate contacts are provided by residues Arg388, 412-415 (DNPR), Gly463, and Glu467. The Meso-diaminopimelate recognition motif motif lies at 412-415 (DNPR).

It belongs to the MurCDEF family. MurE subfamily. Requires Mg(2+) as cofactor. Post-translationally, carboxylation is probably crucial for Mg(2+) binding and, consequently, for the gamma-phosphate positioning of ATP.

Its subcellular location is the cytoplasm. The catalysed reaction is UDP-N-acetyl-alpha-D-muramoyl-L-alanyl-D-glutamate + meso-2,6-diaminopimelate + ATP = UDP-N-acetyl-alpha-D-muramoyl-L-alanyl-gamma-D-glutamyl-meso-2,6-diaminopimelate + ADP + phosphate + H(+). It functions in the pathway cell wall biogenesis; peptidoglycan biosynthesis. Its function is as follows. Catalyzes the addition of meso-diaminopimelic acid to the nucleotide precursor UDP-N-acetylmuramoyl-L-alanyl-D-glutamate (UMAG) in the biosynthesis of bacterial cell-wall peptidoglycan. The protein is UDP-N-acetylmuramoyl-L-alanyl-D-glutamate--2,6-diaminopimelate ligase of Vibrio vulnificus (strain YJ016).